A 3029-amino-acid polypeptide reads, in one-letter code: Polycystin-1-related protein (3029 aa).

An N-terminal signal peptide occupies residues 1 to 21 (MAKHLYLAFSLILVPFLVSKA). Over 22–1685 (KQTSNGEVPW…RDTDKLKNSP (1664 aa)) the chain is Extracellular. One can recognise a WSC domain in the interval 29-121 (VPWLVGCYRY…KNVASVYSTA (93 aa)). 2 PKD domains span residues 364–450 (EGHC…IKGV) and 546–634 (DHLF…PECY). Residues 633-1476 (CYTRGVAIVG…NPYFSDMNHT (844 aa)) enclose the REJ domain. Disordered stretches follow at residues 754-773 (RKGP…HPDE), 909-931 (CPSD…SNSP), and 989-1051 (TSAI…PNKP). Over residues 918–931 (VTPSTTPMTDSNSP) the composition is skewed to polar residues. The segment covering 997-1013 (SGDVDDDEVNNDNDDDS) has biased composition (acidic residues). The span at 1020–1047 (TLPTPLSMTNANSVNKPIITTDTPSFNK) shows a compositional bias: polar residues. The 147-residue stretch at 1525-1671 (RNVHVINQTA…GFIQPPNSLH (147 aa)) folds into the GAIN-B domain. 2 disulfides stabilise this stretch: Cys-1624–Cys-1651 and Cys-1639–Cys-1653. The interval 1624–1671 (CFYWNKRGKHWASDGCRLEKSINHTLVCRCNHLTAFSGGFIQPPNSLH) is GPS. A helical transmembrane segment spans residues 1686 to 1706 (LTMVLVISILVMYFLLLGFCV). Residues 1707-1895 (KADRHDKKKL…SYSRFTRAQR (189 aa)) lie on the Cytoplasmic side of the membrane. Positions 1733–1851 (SRFQLSVQTG…GNGKVECELF (119 aa)) constitute a PLAT domain. Residues 1896-1916 (LSCCLSLLLSFLCVNIAWYRP) form a helical membrane-spanning segment. Residues 1917 to 1933 (KIEVTEVLGVLDVSANS) lie on the Extracellular side of the membrane. Residues 1934–1954 (IMIGVLGSLMVLPVNFLWIFF) form a helical membrane-spanning segment. At 1955–2101 (FRYSRRSLSR…YRSKFSLPHG (147 aa)) the chain is on the cytoplasmic side. The helical transmembrane segment at 2102–2122 (FVYVAWFGCLITGTVTSAITI) threads the bilayer. Residues 2123–2140 (WYGLSFGWDLSVHWFQSL) are Extracellular-facing. A helical membrane pass occupies residues 2141-2161 (VFSLLESLLLSQPIMVLAFIF). Topologically, residues 2162-2250 (YMSHKTKSGK…SLKNRVLRNY (89 aa)) are cytoplasmic. Residues 2251-2271 (VVELFVFIMFFVVTCALVFSV) traverse the membrane as a helical segment. At 2272 to 2462 (ADPDVYHLNQ…GYSYFIRFTK (191 aa)) the chain is on the extracellular side. The chain crosses the membrane as a helical span at residues 2463–2483 (LLFVVFFLYLLQHEFFLALKM). Topologically, residues 2484 to 2496 (TFSYFTNFWRVYQ) are cytoplasmic. A helical transmembrane segment spans residues 2497–2517 (LLTIAISSACIVSYIHWSLSL). Residues 2518–2538 (YALLREVETERQSRVFYLSRQ) are Extracellular-facing. Residues 2539–2559 (ISWSQGFLQASYSLLLFLLLI) traverse the membrane as a helical segment. Residues 2560–2586 (RCLHLLRPFRFVRHFGRILSTSISSLL) are Cytoplasmic-facing. A helical transmembrane segment spans residues 2587 to 2607 (ACWVFGFILVVAFAHPGYLLF). Residues 2608–2651 (GSVHSSFKSFGDAFLLVTSFFRLEGVARYQDFALEEQTLLLSTY) are Extracellular-facing. A helical membrane pass occupies residues 2652–2672 (FALFLIGFCVIVRGSTAAVVL). Residues 2673-3029 (HGIRCLGKRR…PVGQRVVSAM (357 aa)) lie on the Cytoplasmic side of the membrane. Residues 2704–2726 (KKPKKPRPNSVSDLEETDDEDDL) form a disordered region. Over residues 2716 to 2726 (DLEETDDEDDL) the composition is skewed to acidic residues.

This sequence belongs to the polycystin family. As to quaternary structure, heterodimer of 2 chains generated by proteolytic processing; the large extracellular N-terminal fragment and the membrane-bound C-terminal fragment predominantly remain associated and non-covalently linked. Autoproteolytically processed at the GPS region of the GAIN-B domain; this cleavage modulates receptor activity. In terms of tissue distribution, component of the acid-insoluble and acid-soluble organic matrix of the aragonitic skeleton (at protein level).

The protein localises to the membrane. The polypeptide is Polycystin-1-related protein (Acropora millepora (Staghorn coral)).